Reading from the N-terminus, the 88-residue chain is MGTARFLRAVLLLSVLLMVTFPALLSAEHHDGRVDICRLPSDSGDCLRFFEMRYFDGTTCTKFVYGGYGGNDNRFPTEKACMKRCAKA.

The first 27 residues, 1–27, serve as a signal peptide directing secretion; it reads MGTARFLRAVLLLSVLLMVTFPALLSA. Residues 28-33 constitute a propeptide that is removed on maturation; that stretch reads EHHDGR. One can recognise a BPTI/Kunitz inhibitor domain in the interval 37–85; it reads CRLPSDSGDCLRFFEMRYFDGTTCTKFVYGGYGGNDNRFPTEKACMKRC. Disulfide bonds link Cys-37–Cys-85 and Cys-60–Cys-81.

Belongs to the venom Kunitz-type family. 03 (sub-Kunitz) subfamily. In terms of tissue distribution, expressed by the venom gland.

It localises to the secreted. Serine protease inhibitor that inhibits trypsin at a molar ratio of 1:1. The sequence is that of Kunitz-type U15-theraphotoxin-Hhn1i from Cyriopagopus hainanus (Chinese bird spider).